Here is a 39-residue protein sequence, read N- to C-terminus: Photosystem II reaction center protein J (39 aa).

A helical membrane pass occupies residues 7–27 (IPLWLVATIGGIAVLTVLGLF).

This sequence belongs to the PsbJ family. PSII is composed of 1 copy each of membrane proteins PsbA, PsbB, PsbC, PsbD, PsbE, PsbF, PsbH, PsbI, PsbJ, PsbK, PsbL, PsbM, PsbT, PsbX, PsbY, PsbZ, Psb30/Ycf12, at least 3 peripheral proteins of the oxygen-evolving complex and a large number of cofactors. It forms dimeric complexes.

The protein resides in the plastid. The protein localises to the chloroplast thylakoid membrane. In terms of biological role, one of the components of the core complex of photosystem II (PSII). PSII is a light-driven water:plastoquinone oxidoreductase that uses light energy to abstract electrons from H(2)O, generating O(2) and a proton gradient subsequently used for ATP formation. It consists of a core antenna complex that captures photons, and an electron transfer chain that converts photonic excitation into a charge separation. This is Photosystem II reaction center protein J from Cyanidioschyzon merolae (strain NIES-3377 / 10D) (Unicellular red alga).